The following is a 540-amino-acid chain: Berberine bridge enzyme-like 16 (540 aa).

The first 24 residues, 1–24, serve as a signal peptide directing secretion; sequence MKFWSRPLTFLIIIIYLIIQQVNS. A disulfide bond links cysteine 38 and cysteine 101. Residue asparagine 59 is glycosylated (N-linked (GlcNAc...) asparagine). One can recognise an FAD-binding PCMH-type domain in the interval 79–254; it reads STRKPEVIVA…LAWKIKLVRV (176 aa). A cross-link (6-(S-cysteinyl)-8alpha-(pros-histidyl)-FAD (His-Cys)) is located at residues 116-178; that stretch reads HDYEGFSYTS…KVHAFPAGVC (63 aa). Residues asparagine 325 and asparagine 496 are each glycosylated (N-linked (GlcNAc...) asparagine).

This sequence belongs to the oxygen-dependent FAD-linked oxidoreductase family. It depends on FAD as a cofactor. In terms of processing, the FAD cofactor is bound via a bicovalent 6-S-cysteinyl, 8alpha-N1-histidyl FAD linkage.

Its subcellular location is the secreted. It localises to the cell wall. The protein is Berberine bridge enzyme-like 16 of Arabidopsis thaliana (Mouse-ear cress).